The primary structure comprises 148 residues: Large ribosomal subunit protein uL15 (148 aa).

Positions 18 to 38 are disordered; sequence GYGRVGKHRKHPGGRGNAGGL.

The protein belongs to the universal ribosomal protein uL15 family.

In Dictyostelium discoideum (Social amoeba), this protein is Large ribosomal subunit protein uL15 (rpl27a).